The following is a 381-amino-acid chain: tRNA (guanine(26)-N(2))-dimethyltransferase (381 aa).

One can recognise a Trm1 methyltransferase domain in the interval 7–378; the sequence is IEVQEGKAKI…APYEVFIETI (372 aa). S-adenosyl-L-methionine-binding residues include arginine 39, arginine 64, aspartate 81, aspartate 123, and alanine 124.

It belongs to the class I-like SAM-binding methyltransferase superfamily. Trm1 family.

The enzyme catalyses guanosine(26) in tRNA + 2 S-adenosyl-L-methionine = N(2)-dimethylguanosine(26) in tRNA + 2 S-adenosyl-L-homocysteine + 2 H(+). Its function is as follows. Dimethylates a single guanine residue at position 26 of a number of tRNAs using S-adenosyl-L-methionine as donor of the methyl groups. The chain is tRNA (guanine(26)-N(2))-dimethyltransferase from Pyrococcus horikoshii (strain ATCC 700860 / DSM 12428 / JCM 9974 / NBRC 100139 / OT-3).